Reading from the N-terminus, the 361-residue chain is tRNA/tmRNA (uracil-C(5))-methyltransferase (361 aa).

Positions 185, 213, 218, 234, and 294 each coordinate S-adenosyl-L-methionine. The active-site Nucleophile is the Cys-319. The active-site Proton acceptor is Glu-353.

The protein belongs to the class I-like SAM-binding methyltransferase superfamily. RNA M5U methyltransferase family. TrmA subfamily.

The enzyme catalyses uridine(54) in tRNA + S-adenosyl-L-methionine = 5-methyluridine(54) in tRNA + S-adenosyl-L-homocysteine + H(+). The catalysed reaction is uridine(341) in tmRNA + S-adenosyl-L-methionine = 5-methyluridine(341) in tmRNA + S-adenosyl-L-homocysteine + H(+). In terms of biological role, dual-specificity methyltransferase that catalyzes the formation of 5-methyluridine at position 54 (m5U54) in all tRNAs, and that of position 341 (m5U341) in tmRNA (transfer-mRNA). This chain is tRNA/tmRNA (uracil-C(5))-methyltransferase, found in Pseudomonas putida (strain ATCC 47054 / DSM 6125 / CFBP 8728 / NCIMB 11950 / KT2440).